The primary structure comprises 191 residues: UPF0302 protein SA1295 (191 aa).

It belongs to the UPF0302 family.

This Staphylococcus aureus (strain N315) protein is UPF0302 protein SA1295.